The primary structure comprises 246 residues: NAD-dependent protein deacylase (246 aa).

Positions 1 to 237 (MSLPYRHVVI…PRLVEEILAA (237 aa)) constitute a Deacetylase sirtuin-type domain. Position 13 to 32 (13 to 32 (GAGISAESGIQTFRAQDGLW)) interacts with NAD(+). Residues Y57 and R60 each coordinate substrate. NAD(+) is bound at residue 94 to 97 (QNID). H112 functions as the Proton acceptor in the catalytic mechanism. The Zn(2+) site is built by C120 and C139. NAD(+)-binding positions include 179–181 (GTS), 205–207 (NLE), and A223.

It belongs to the sirtuin family. Class III subfamily. The cofactor is Zn(2+).

It localises to the cytoplasm. It carries out the reaction N(6)-acetyl-L-lysyl-[protein] + NAD(+) + H2O = 2''-O-acetyl-ADP-D-ribose + nicotinamide + L-lysyl-[protein]. The catalysed reaction is N(6)-succinyl-L-lysyl-[protein] + NAD(+) + H2O = 2''-O-succinyl-ADP-D-ribose + nicotinamide + L-lysyl-[protein]. Its function is as follows. NAD-dependent lysine deacetylase and desuccinylase that specifically removes acetyl and succinyl groups on target proteins. Modulates the activities of several proteins which are inactive in their acylated form. The polypeptide is NAD-dependent protein deacylase (Vibrio cholerae serotype O1 (strain ATCC 39315 / El Tor Inaba N16961)).